Reading from the N-terminus, the 251-residue chain is Methionine aminopeptidase (251 aa).

His76 lines the substrate pocket. Residues Asp93, Asp104, and His168 each contribute to the a divalent metal cation site. His175 contributes to the substrate binding site. Residues Glu202 and Glu233 each coordinate a divalent metal cation.

It belongs to the peptidase M24A family. Methionine aminopeptidase type 1 subfamily. In terms of assembly, monomer. It depends on Co(2+) as a cofactor. The cofactor is Zn(2+). Requires Mn(2+) as cofactor. Fe(2+) is required as a cofactor.

The catalysed reaction is Release of N-terminal amino acids, preferentially methionine, from peptides and arylamides.. In terms of biological role, removes the N-terminal methionine from nascent proteins. The N-terminal methionine is often cleaved when the second residue in the primary sequence is small and uncharged (Met-Ala-, Cys, Gly, Pro, Ser, Thr, or Val). Requires deformylation of the N(alpha)-formylated initiator methionine before it can be hydrolyzed. This chain is Methionine aminopeptidase, found in Staphylococcus epidermidis (strain ATCC 35984 / DSM 28319 / BCRC 17069 / CCUG 31568 / BM 3577 / RP62A).